Here is a 507-residue protein sequence, read N- to C-terminus: ATP synthase subunit alpha, chloroplastic (507 aa).

170 to 177 (GDRQTGKT) provides a ligand contact to ATP.

Belongs to the ATPase alpha/beta chains family. F-type ATPases have 2 components, CF(1) - the catalytic core - and CF(0) - the membrane proton channel. CF(1) has five subunits: alpha(3), beta(3), gamma(1), delta(1), epsilon(1). CF(0) has four main subunits: a, b, b' and c.

It is found in the plastid. Its subcellular location is the chloroplast thylakoid membrane. The enzyme catalyses ATP + H2O + 4 H(+)(in) = ADP + phosphate + 5 H(+)(out). Its function is as follows. Produces ATP from ADP in the presence of a proton gradient across the membrane. The alpha chain is a regulatory subunit. The protein is ATP synthase subunit alpha, chloroplastic of Panax ginseng (Korean ginseng).